We begin with the raw amino-acid sequence, 378 residues long: Monomethylxanthine methyltransferase 1 (378 aa).

8 residues coordinate S-adenosyl-L-homocysteine: tyrosine 18, cysteine 61, asparagine 66, aspartate 100, leucine 101, serine 139, phenylalanine 140, and cysteine 156. Theobromine contacts are provided by tyrosine 157, histidine 160, and tryptophan 161. Asparagine 178, aspartate 260, phenylalanine 262, and asparagine 263 together coordinate Mg(2+). Tyrosine 362 serves as a coordination point for theobromine.

The protein belongs to the methyltransferase superfamily. Type-7 methyltransferase family. Mg(2+) serves as cofactor. In terms of tissue distribution, expressed, at low levels, in stems, young leaves, floral buds and immature fruits (grains), but not in roots, old leaves and mature fruits.

Its subcellular location is the cytoplasm. It carries out the reaction 7-methylxanthine + S-adenosyl-L-methionine = theobromine + S-adenosyl-L-homocysteine + H(+). The protein operates within alkaloid biosynthesis. In terms of biological role, involved in the biosynthesis of caffeine. Catalyzes the conversion of 7-methylxanthine (7mX) to theobromine and of paraxanthine to caffeine. Has a 5-fold preference for 7mX. This chain is Monomethylxanthine methyltransferase 1, found in Coffea arabica (Arabian coffee).